A 186-amino-acid chain; its full sequence is Chromosome-anchoring protein RacA (186 aa).

Residues threonine 3–glutamine 23 constitute a DNA-binding region (H-T-H motif). The stretch at glutamate 90–arginine 170 forms a coiled coil. The tract at residues glutamate 158–phenylalanine 186 is disordered. The span at methionine 160–lysine 175 shows a compositional bias: basic and acidic residues.

The protein belongs to the RacA family.

Its subcellular location is the cytoplasm. Required for the formation of axial filaments and for anchoring the origin regions at the cell poles in sporulating cells, thus ensuring proper chromosome segregation in the prespore. Binds in a dispersed manner throughout the chromosome but preferentially to sites clustered in the origin portion of the chromosome, causing condensation of the chromosome and its remodeling into an elongated, anchored structure. The polypeptide is Chromosome-anchoring protein RacA (Bacillus licheniformis (strain ATCC 14580 / DSM 13 / JCM 2505 / CCUG 7422 / NBRC 12200 / NCIMB 9375 / NCTC 10341 / NRRL NRS-1264 / Gibson 46)).